Here is a 354-residue protein sequence, read N- to C-terminus: Probable RNA methyltransferase AZOSEA28700 (354 aa).

Catalysis depends on Glu88, which acts as the Proton acceptor. One can recognise a Radical SAM core domain in the interval 91-317 (LLPRDGLCVS…TKLRHSAGQD (227 aa)). A disulfide bond links Cys98 and Cys322. Positions 105, 109, and 112 each coordinate [4Fe-4S] cluster. Residues 150-151 (GE), Ser180, 203-205 (SLH), and Asn279 contribute to the S-adenosyl-L-methionine site. The active-site S-methylcysteine intermediate is the Cys322.

It belongs to the radical SAM superfamily. RlmN family. Requires [4Fe-4S] cluster as cofactor.

Its subcellular location is the cytoplasm. This chain is Probable RNA methyltransferase AZOSEA28700, found in Aromatoleum aromaticum (strain DSM 19018 / LMG 30748 / EbN1) (Azoarcus sp. (strain EbN1)).